The following is an 87-amino-acid chain: Small ribosomal subunit protein uS17 (87 aa).

It belongs to the universal ribosomal protein uS17 family. Part of the 30S ribosomal subunit.

Its function is as follows. One of the primary rRNA binding proteins, it binds specifically to the 5'-end of 16S ribosomal RNA. The polypeptide is Small ribosomal subunit protein uS17 (Endomicrobium trichonymphae).